A 709-amino-acid polypeptide reads, in one-letter code: Dibasic-processing endoprotease (709 aa).

The first 22 residues, 1-22 (MHPALLCGPILAIFLQFLVSSC), serve as a signal peptide directing secretion. Propeptides lie at residues 23–82 (SPLE…IRKR) and 83–102 (GIDA…RYKR). The Lumenal segment spans residues 103 to 668 (DASESDELLN…QPVLEPSYRE (566 aa)). One can recognise a Peptidase S8 domain in the interval 128–440 (QWHIFNSNNP…FGKLDASKFV (313 aa)). N-linked (GlcNAc...) asparagine glycosylation occurs at N155. Catalysis depends on charge relay system residues D162 and H200. 2 disulfides stabilise this stretch: C216-C363 and C308-C338. The active-site Charge relay system is the S371. Residues 449-588 (VNPQTWLIAP…QLALWGESEN (140 aa)) form the P/Homo B domain. N463, N471, and N620 each carry an N-linked (GlcNAc...) asparagine glycan. Residues 669–693 (IVAFITFFLLFAFIFVAVIWTWISA) form a helical membrane-spanning segment. At 694 to 709 (FWKAKAPPPLSQQEIA) the chain is on the cytoplasmic side.

This sequence belongs to the peptidase S8 family. Furin subfamily. It depends on Ca(2+) as a cofactor. Post-translationally, N-glycosylated.

It is found in the golgi apparatus. Its subcellular location is the trans-Golgi network membrane. Membrane-bound, subtilisin-like serine protease that processes the P-factor precursor and other precursor proteins. Essential for cell viability. Cleaves substrate on the C-terminal side of dibasic residues. The sequence is that of Dibasic-processing endoprotease (krp1) from Schizosaccharomyces pombe (strain 972 / ATCC 24843) (Fission yeast).